A 298-amino-acid polypeptide reads, in one-letter code: Probable endonuclease 4 (298 aa).

Zn(2+) contacts are provided by His-69, His-110, Glu-145, Asp-179, His-182, His-214, Asp-227, His-229, and Glu-259.

Belongs to the AP endonuclease 2 family. It depends on Zn(2+) as a cofactor.

The enzyme catalyses Endonucleolytic cleavage to 5'-phosphooligonucleotide end-products.. Its function is as follows. Endonuclease IV plays a role in DNA repair. It cleaves phosphodiester bonds at apurinic or apyrimidinic (AP) sites, generating a 3'-hydroxyl group and a 5'-terminal sugar phosphate. This is Probable endonuclease 4 from Geobacillus sp. (strain WCH70).